Reading from the N-terminus, the 303-residue chain is Quinolinate synthase (303 aa).

Iminosuccinate-binding residues include histidine 25 and serine 42. Cysteine 87 contributes to the [4Fe-4S] cluster binding site. Iminosuccinate contacts are provided by residues 113 to 115 (YVN) and serine 130. Cysteine 174 contributes to the [4Fe-4S] cluster binding site. Iminosuccinate contacts are provided by residues 200–202 (HPE) and threonine 217. Cysteine 260 is a binding site for [4Fe-4S] cluster.

It belongs to the quinolinate synthase family. Type 2 subfamily. As to quaternary structure, homodimer. Requires [4Fe-4S] cluster as cofactor.

It is found in the cytoplasm. It catalyses the reaction iminosuccinate + dihydroxyacetone phosphate = quinolinate + phosphate + 2 H2O + H(+). The protein operates within cofactor biosynthesis; NAD(+) biosynthesis; quinolinate from iminoaspartate: step 1/1. In terms of biological role, catalyzes the condensation of iminoaspartate with dihydroxyacetone phosphate to form quinolinate. The polypeptide is Quinolinate synthase (Pyrococcus furiosus (strain ATCC 43587 / DSM 3638 / JCM 8422 / Vc1)).